The primary structure comprises 89 residues: Small ribosomal subunit protein uS15 (89 aa).

A compositionally biased stretch (basic and acidic residues) spans 1–21 (MALTTEEKKQVLSEYGLHETD). Positions 1–24 (MALTTEEKKQVLSEYGLHETDTGS) are disordered.

It belongs to the universal ribosomal protein uS15 family. Part of the 30S ribosomal subunit. Forms a bridge to the 50S subunit in the 70S ribosome, contacting the 23S rRNA.

Functionally, one of the primary rRNA binding proteins, it binds directly to 16S rRNA where it helps nucleate assembly of the platform of the 30S subunit by binding and bridging several RNA helices of the 16S rRNA. Forms an intersubunit bridge (bridge B4) with the 23S rRNA of the 50S subunit in the ribosome. This Rhodococcus jostii (strain RHA1) protein is Small ribosomal subunit protein uS15.